Reading from the N-terminus, the 420-residue chain is DNA repair protein NreA (420 aa).

The PIP motif motif lies at glutamine 413 to alanine 420.

The protein belongs to the Nre family. As to quaternary structure, interacts with the DNA polymerase sliding clamp (PCNA) via the PIP (PCNA-interacting peptide) motif.

In terms of biological role, involved in DNA damage repair. Works together with the UvrABC proteins in repairing DNA damage resulting from exposure to the DNA damaging agent mitomycin C (MMC). This is DNA repair protein NreA from Haloferax volcanii (strain ATCC 29605 / DSM 3757 / JCM 8879 / NBRC 14742 / NCIMB 2012 / VKM B-1768 / DS2) (Halobacterium volcanii).